A 645-amino-acid polypeptide reads, in one-letter code: Cysteine-rich receptor-like protein kinase 10 (645 aa).

A signal peptide spans 1–27; that stretch reads MSMACYYLAAAAAGLALLLLHAPLTDA. 2 Gnk2-homologous domains span residues 28–132 and 140–251; these read QTLV…NDAF and SQGM…VYPF. At 28–283 the chain is on the extracellular side; it reads QTLVPLCGDS…AGERSKNKRS (256 aa). Residues asparagine 39 and asparagine 91 are each glycosylated (N-linked (GlcNAc...) asparagine). 2 cysteine pairs are disulfide-bonded: cysteine 86/cysteine 95 and cysteine 98/cysteine 123. Residues asparagine 151 and asparagine 169 are each glycosylated (N-linked (GlcNAc...) asparagine). Cystine bridges form between cysteine 204/cysteine 213 and cysteine 216/cysteine 242. Residues 284–304 form a helical membrane-spanning segment; the sequence is AILAISMPTIALVLATIAAWF. Residues 305-645 lie on the Cytoplasmic side of the membrane; sequence CSTSWRRRRL…WVQEIGATAS (341 aa). Residues 348–619 enclose the Protein kinase domain; that stretch reads FSEHKRLGEG…PLMSAVNAML (272 aa). ATP is bound by residues 354–362 and lysine 376; that span reads LGEGGFGVV. Aspartate 473 serves as the catalytic Proton acceptor.

Belongs to the protein kinase superfamily. Ser/Thr protein kinase family. CRK subfamily.

It localises to the membrane. Functionally, involved in disease resistance. Required for NPR1/NH1-mediated immunity to the bacterial blight pathogen Xanthomomas oryzae pv. oryzae (Xoo). Required for the benzothiadiazole (BTH)-induced immune response. Probably regulated by the transcription factor TGA2.1. This is Cysteine-rich receptor-like protein kinase 10 from Oryza sativa subsp. japonica (Rice).